The primary structure comprises 21 residues: 5-methyltetrahydropteroyltriglutamate--homocysteine methyltransferase (21 aa).

It belongs to the vitamin-B12 independent methionine synthase family. It depends on Zn(2+) as a cofactor.

The protein resides in the cytoplasm. The catalysed reaction is 5-methyltetrahydropteroyltri-L-glutamate + L-homocysteine = tetrahydropteroyltri-L-glutamate + L-methionine. The protein operates within amino-acid biosynthesis; L-methionine biosynthesis via de novo pathway; L-methionine from L-homocysteine (MetE route): step 1/1. Catalyzes the transfer of a methyl group from 5-methyltetrahydrofolate to homocysteine resulting in methionine formation. The polypeptide is 5-methyltetrahydropteroyltriglutamate--homocysteine methyltransferase (Populus euphratica (Euphrates poplar)).